Here is a 144-residue protein sequence, read N- to C-terminus: Large ribosomal subunit protein uL13 (144 aa).

Belongs to the universal ribosomal protein uL13 family. As to quaternary structure, part of the 50S ribosomal subunit.

In terms of biological role, this protein is one of the early assembly proteins of the 50S ribosomal subunit, although it is not seen to bind rRNA by itself. It is important during the early stages of 50S assembly. In Clostridium botulinum (strain ATCC 19397 / Type A), this protein is Large ribosomal subunit protein uL13.